Consider the following 266-residue polypeptide: uncharacterized protein (266 aa).

Residues 12-28 form a helical membrane-spanning segment; sequence ILAAGLAIGCAGGYYAY. Residues 40-140 form the FAD-binding FR-type domain; that stretch reads EIYAPFTVNK…RGPFKTTKLD (101 aa).

Belongs to the flavoprotein pyridine nucleotide cytochrome reductase family. FAD serves as cofactor.

It localises to the mitochondrion outer membrane. This is an uncharacterized protein from Schizosaccharomyces pombe (strain 972 / ATCC 24843) (Fission yeast).